The sequence spans 385 residues: Chaperone protein DnaJ (385 aa).

The J domain occupies 5-70 (DFYDVLGVSR…QSRAAYDQFG (66 aa)). Residues 143–221 (GKKAQVRVPG…CHGAGRVEKE (79 aa)) form a CR-type zinc finger. Cys156, Cys159, Cys173, Cys176, Cys195, Cys198, Cys209, and Cys212 together coordinate Zn(2+). 4 CXXCXGXG motif repeats span residues 156–163 (CEVCTGTG), 173–180 (CPTCQGHG), 195–202 (CPTCHGRG), and 209–216 (CTNCHGAG).

This sequence belongs to the DnaJ family. As to quaternary structure, homodimer. The cofactor is Zn(2+).

The protein resides in the cytoplasm. Participates actively in the response to hyperosmotic and heat shock by preventing the aggregation of stress-denatured proteins and by disaggregating proteins, also in an autonomous, DnaK-independent fashion. Unfolded proteins bind initially to DnaJ; upon interaction with the DnaJ-bound protein, DnaK hydrolyzes its bound ATP, resulting in the formation of a stable complex. GrpE releases ADP from DnaK; ATP binding to DnaK triggers the release of the substrate protein, thus completing the reaction cycle. Several rounds of ATP-dependent interactions between DnaJ, DnaK and GrpE are required for fully efficient folding. Also involved, together with DnaK and GrpE, in the DNA replication of plasmids through activation of initiation proteins. This chain is Chaperone protein DnaJ, found in Parvibaculum lavamentivorans (strain DS-1 / DSM 13023 / NCIMB 13966).